Consider the following 206-residue polypeptide: Putative amino-acid transporter YggA (206 aa).

The next 6 helical transmembrane spans lie at 1–21, 37–57, 65–85, 116–136, 148–168, and 185–205; these read MFAT…PIGA, LLAA…GVFG, SPIG…WFGI, LGVT…LGSF, FAAG…FGAA, and TIVG…ALLA.

This sequence belongs to the LysE/ArgO transporter (TC 2.A.75) family.

It is found in the cell membrane. The protein is Putative amino-acid transporter YggA (yggA) of Aeromonas salmonicida.